Here is a 74-residue protein sequence, read N- to C-terminus: Psi-conotoxin PrIIIE (74 aa).

Positions methionine 1–alanine 19 are cleaved as a signal peptide. Positions leucine 20–arginine 50 are excised as a propeptide. 3 cysteine pairs are disulfide-bonded: cysteine 54-cysteine 66, cysteine 55-cysteine 71, and cysteine 61-cysteine 72. The residue at position 72 (cysteine 72) is a Cysteine amide.

The protein belongs to the conotoxin M superfamily. In terms of tissue distribution, expressed by the venom duct.

Its subcellular location is the secreted. Psi-conotoxins act on postsynaptic membranes, and act as non-competitive antagonist of nicotinic acetylcholine receptors (nAChR). Reversibly inhibits both adult- and fetal-types nAChR. The inhibition potency against the adult- (alpha-1/beta-1/epsilon/delta) is higher than against the fetal-type (alpha-1/beta-1/gamma/delta). Induces flaccid paralysis in goldfish, but does not induce any remarkable behavior in mice and does not block action potential in directly stimulated frog muscle preparations. The polypeptide is Psi-conotoxin PrIIIE (Conus parius (Cone snail)).